The chain runs to 292 residues: UPF0696 protein C11orf68 homolog (292 aa).

Residues 1 to 10 are compositionally biased toward low complexity; the sequence is MAAAAAAVAG. The segment at 1–60 is disordered; that stretch reads MAAAAAAVAGAGRGGGGGADPGQERSRARSWVGAERSEGRRMEPNEELEEEDSPGGREDG. Residues 11–20 show a composition bias toward gly residues; sequence AGRGGGGGAD. Positions 35–44 are enriched in basic and acidic residues; sequence ERSEGRRMEP.

This sequence belongs to the UPF0696 family.

The chain is UPF0696 protein C11orf68 homolog (Bles03) from Rattus norvegicus (Rat).